We begin with the raw amino-acid sequence, 721 residues long: Polyribonucleotide nucleotidyltransferase (721 aa).

Aspartate 495 and aspartate 501 together coordinate Mg(2+). The KH domain occupies 562-621; that stretch reads PRLLSFRIDPELIGTVIGPGGRTIKGITERTNTKIDIEDSGIVTIASHDGAAAEEAQKII. Residues 631–699 enclose the S1 motif domain; the sequence is GEMFSGSITR…NRGRINLTLR (69 aa). The interval 700–721 is disordered; sequence GVPQSGESTEVEPQPTPVAPLS.

Belongs to the polyribonucleotide nucleotidyltransferase family. Mg(2+) is required as a cofactor.

It localises to the cytoplasm. The catalysed reaction is RNA(n+1) + phosphate = RNA(n) + a ribonucleoside 5'-diphosphate. Involved in mRNA degradation. Catalyzes the phosphorolysis of single-stranded polyribonucleotides processively in the 3'- to 5'-direction. This is Polyribonucleotide nucleotidyltransferase from Synechococcus sp. (strain CC9902).